A 165-amino-acid polypeptide reads, in one-letter code: LIM domain transcription factor LMO4.2 (165 aa).

LIM zinc-binding domains lie at 21 to 83 and 85 to 147; these read KRCA…LFGN and GACS…ALIN.

In terms of biological role, acts as a positive cofactor of GATA transcription factors to establish the identity of the ventral mesoderm during gastrulation. Down-regulation in the dorsal mesoderm is necessary for the proper formation of this territory since, when present, lmo4 may bind ldb1 and restrict the availability of this cofactor for Spemman organizer transcription factors. At neurula stages, suppresses primary neuron differentiation and modulates gene expression at the Isthmic Organizer of the midbrain-hindbrain boundary. This Xenopus tropicalis (Western clawed frog) protein is LIM domain transcription factor LMO4.2 (lmo4.2).